Consider the following 350-residue polypeptide: Adenine deaminase (350 aa).

Zn(2+) is bound by residues H24, H26, and H207. The active-site Proton donor is E210. D288 contributes to the Zn(2+) binding site. A substrate-binding site is contributed by D289.

It belongs to the metallo-dependent hydrolases superfamily. Adenosine and AMP deaminases family. Adenine deaminase type 2 subfamily. Zn(2+) serves as cofactor.

The enzyme catalyses adenine + H2O + H(+) = hypoxanthine + NH4(+). Its function is as follows. Catalyzes the hydrolytic deamination of adenine to hypoxanthine. Plays an important role in the purine salvage pathway and in nitrogen catabolism. In Paraburkholderia phytofirmans (strain DSM 17436 / LMG 22146 / PsJN) (Burkholderia phytofirmans), this protein is Adenine deaminase.